The chain runs to 914 residues: Neutral alpha-glucosidase C (914 aa).

Aspartate 511 serves as the catalytic Nucleophile. Residue glutamate 514 is part of the active site. The Proton donor role is filled by aspartate 587.

Belongs to the glycosyl hydrolase 31 family.

The enzyme catalyses Hydrolysis of terminal, non-reducing (1-&gt;4)-linked alpha-D-glucose residues with release of alpha-D-glucose.. Its function is as follows. Has alpha-glucosidase activity. This chain is Neutral alpha-glucosidase C (GANC), found in Homo sapiens (Human).